The chain runs to 165 residues: Phosphopantetheine adenylyltransferase (165 aa).

Serine 9 is a substrate binding site. Residues 9 to 10 and histidine 17 contribute to the ATP site; that span reads SF. Lysine 41, isoleucine 75, and arginine 89 together coordinate substrate. ATP contacts are provided by residues 90–92, glutamate 100, and 125–131; these read GVR and YLFVRSD.

The protein belongs to the bacterial CoaD family. Homohexamer. Mg(2+) serves as cofactor.

The protein localises to the cytoplasm. The catalysed reaction is (R)-4'-phosphopantetheine + ATP + H(+) = 3'-dephospho-CoA + diphosphate. Its pathway is cofactor biosynthesis; coenzyme A biosynthesis; CoA from (R)-pantothenate: step 4/5. Its function is as follows. Reversibly transfers an adenylyl group from ATP to 4'-phosphopantetheine, yielding dephospho-CoA (dPCoA) and pyrophosphate. The chain is Phosphopantetheine adenylyltransferase from Borrelia turicatae (strain 91E135).